The primary structure comprises 173 residues: Nucleoside-triphosphatase THEP1 (173 aa).

Residues 9-16 (GPPGVGKT) and 97-104 (LYVIDEVG) each bind ATP.

This sequence belongs to the THEP1 NTPase family.

It carries out the reaction a ribonucleoside 5'-triphosphate + H2O = a ribonucleoside 5'-diphosphate + phosphate + H(+). Its function is as follows. Has nucleotide phosphatase activity towards ATP, GTP, CTP, TTP and UTP. May hydrolyze nucleoside diphosphates with lower efficiency. The chain is Nucleoside-triphosphatase THEP1 from Caldivirga maquilingensis (strain ATCC 700844 / DSM 13496 / JCM 10307 / IC-167).